Reading from the N-terminus, the 121-residue chain is Large ribosomal subunit protein bL12 (121 aa).

This sequence belongs to the bacterial ribosomal protein bL12 family. As to quaternary structure, homodimer. Part of the ribosomal stalk of the 50S ribosomal subunit. Forms a multimeric L10(L12)X complex, where L10 forms an elongated spine to which 2 to 4 L12 dimers bind in a sequential fashion. Binds GTP-bound translation factors.

Its function is as follows. Forms part of the ribosomal stalk which helps the ribosome interact with GTP-bound translation factors. Is thus essential for accurate translation. The chain is Large ribosomal subunit protein bL12 from Shewanella baltica (strain OS185).